Here is a 158-residue protein sequence, read N- to C-terminus: Small ribosomal subunit protein uS7 (158 aa).

It belongs to the universal ribosomal protein uS7 family. In terms of assembly, part of the 30S ribosomal subunit. Contacts proteins S9 and S11.

Its function is as follows. One of the primary rRNA binding proteins, it binds directly to 16S rRNA where it nucleates assembly of the head domain of the 30S subunit. Is located at the subunit interface close to the decoding center, probably blocks exit of the E-site tRNA. The chain is Small ribosomal subunit protein uS7 from Flavobacterium johnsoniae (strain ATCC 17061 / DSM 2064 / JCM 8514 / BCRC 14874 / CCUG 350202 / NBRC 14942 / NCIMB 11054 / UW101) (Cytophaga johnsonae).